The following is a 51-amino-acid chain: Large ribosomal subunit protein bL33 (51 aa).

Belongs to the bacterial ribosomal protein bL33 family.

This Psychrobacter sp. (strain PRwf-1) protein is Large ribosomal subunit protein bL33.